The sequence spans 379 residues: Pectin lyase B (379 aa).

The N-terminal stretch at 1-19 (MRLHAPILSLLAAAASTSA) is a signal peptide. 2 cysteine pairs are disulfide-bonded: Cys-82–Cys-101 and Cys-91–Cys-225. Asn-128 carries an N-linked (GlcNAc...) asparagine glycan. The active site involves Arg-255. Cys-322 and Cys-330 are oxidised to a cystine.

Belongs to the polysaccharide lyase 1 family.

It localises to the secreted. The enzyme catalyses Eliminative cleavage of (1-&gt;4)-alpha-D-galacturonan methyl ester to give oligosaccharides with 4-deoxy-6-O-methyl-alpha-D-galact-4-enuronosyl groups at their non-reducing ends.. Functionally, pectinolytic enzymes consist of four classes of enzymes: pectin lyase, polygalacturonase, pectin methylesterase and rhamnogalacturonase. Among pectinolytic enzymes, pectin lyase is the most important in depolymerization of pectin, since it cleaves internal glycosidic bonds of highly methylated pectins. This Emericella nidulans (strain FGSC A4 / ATCC 38163 / CBS 112.46 / NRRL 194 / M139) (Aspergillus nidulans) protein is Pectin lyase B (pelB).